A 190-amino-acid chain; its full sequence is Protein GrpE (190 aa).

The segment at 1–40 (MAKEKKEEVKEEEVSEATSTEGSTDVESTNNDDLTTETQA) is disordered. The segment covering 22-40 (GSTDVESTNNDDLTTETQA) has biased composition (polar residues).

This sequence belongs to the GrpE family. Homodimer.

It localises to the cytoplasm. In terms of biological role, participates actively in the response to hyperosmotic and heat shock by preventing the aggregation of stress-denatured proteins, in association with DnaK and GrpE. It is the nucleotide exchange factor for DnaK and may function as a thermosensor. Unfolded proteins bind initially to DnaJ; upon interaction with the DnaJ-bound protein, DnaK hydrolyzes its bound ATP, resulting in the formation of a stable complex. GrpE releases ADP from DnaK; ATP binding to DnaK triggers the release of the substrate protein, thus completing the reaction cycle. Several rounds of ATP-dependent interactions between DnaJ, DnaK and GrpE are required for fully efficient folding. In Pediococcus pentosaceus (strain ATCC 25745 / CCUG 21536 / LMG 10740 / 183-1w), this protein is Protein GrpE.